The following is a 205-amino-acid chain: Putative STAG3-like protein 1 (205 aa).

An SCD domain is found at 10-95 (PKVTCRDVLP…GRFKDWMVSM (86 aa)).

This sequence belongs to the SCC3 family.

The protein resides in the nucleus. The polypeptide is Putative STAG3-like protein 1 (STAG3L1) (Homo sapiens (Human)).